Here is a 153-residue protein sequence, read N- to C-terminus: Actin-related protein 2/3 complex subunit 5-like protein (153 aa).

Serine 64 carries the post-translational modification Phosphoserine.

It belongs to the ARPC5 family. In terms of assembly, may be a component of the Arp2/3 complex in which it may replace ARPC5.

The protein localises to the cytoplasm. The protein resides in the cytoskeleton. Its function is as follows. May function as component of the Arp2/3 complex which is involved in regulation of actin polymerization and together with an activating nucleation-promoting factor (NPF) mediates the formation of branched actin networks. This Rattus norvegicus (Rat) protein is Actin-related protein 2/3 complex subunit 5-like protein (Arpc5l).